Reading from the N-terminus, the 528-residue chain is OLD nuclease (528 aa).

Positions 1–153 (MLKRLQVKNF…LAQHLPSIRG (153 aa)) are ATPase domain N-terminus. 31–35 (GAGKT) contributes to the ATP binding site. A dimerization domain region spans residues 154–245 (SILGRLLQPV…RESDLTLPGD (92 aa)). The ATPase domain C-terminus stretch occupies residues 246 to 369 (ELGLGIQSAI…FDTARNEVLF (124 aa)). The tract at residues 370–528 (AKRALLVEGY…IRQVTRPMEE (159 aa)) is toprim domain. Residues glutamate 377, aspartate 381, aspartate 431, and aspartate 433 each contribute to the a divalent metal cation site. Positions 440–461 (RADEETRRKQEQENKAEQEKNQ) are disordered. 2 residues coordinate a divalent metal cation: serine 478 and glutamate 480. The active-site Stabilizes transition state or protonates leaving group is arginine 487.

Belongs to the class 1 OLD nuclease family. Homodimer. The cofactor is Mg(2+). It depends on Mn(2+) as a cofactor. Requires Ca(2+) as cofactor.

It catalyses the reaction Exonucleolytic cleavage in the 5'- to 3'-direction to yield nucleoside 5'-phosphates.. An exodeoxyribonuclease that degrades linear or supercoiled dsDNA from 5'-3'. Nicks and linearizes circular DNA. Activity is not stimulated by ATP or AMP-PNP, although it has DNA-stimulated ATPase activity. This chain is OLD nuclease, found in Thermus scotoductus (strain ATCC 700910 / SA-01).